The following is a 475-amino-acid chain: MVDTEMPFWPTNFGISSVDLSMMDDHSHSFDIKPFTTVDFSSISAPHYEDIPFTRADPMVADYKYDLKLQEYQSAIKVEPASPPYYSEKAQLYNRPHEEPSNSLMAIECRVCGDKASGFHYGVHACEGCKGFFRRTIRLKLIYDRCDLNCRIHKKSRNKCQYCRFQKCLAVGMSHNAIRFGRMPQAEKEKLLAEISSDIDQLNPESADLRALAKHLYDSYIKSFPLTKAKARAILTGKTTDKSPFVIYDMNSLMMGEDKIKFKHITPLQEQSKEVAIRIFQGCQFRSVEAVQEITEYAKNIPGFINLDLNDQVTLLKYGVHEIIYTMLASLMNKDGVLISEGQGFMTREFLKSLRKPFGDFMEPKFEFAVKFNALELDDSDLAIFIAVIILSGDRPGLLNVKPIEDIQDNLLQALELQLKLNHPESSQLFAKVLQKMTDLRQIVTEHVQLLHVIKKTETDMSLHPLLQEIYKDLY.

An O-linked (GlcNAc) threonine glycan is attached at T54. Phosphoserine; by MAPK is present on S82. The segment at residues 106–180 (AIECRVCGDK…VGMSHNAIRF (75 aa)) is a DNA-binding region (nuclear receptor). 2 NR C4-type zinc fingers span residues 109–129 (CRVCGDKASGFHYGVHACEGC) and 146–168 (CDLNCRIHKKSRNKCQYCRFQKC). The interaction with FAM120B stretch occupies residues 175 to 250 (HNAIRFGRMP…DKSPFVIYDM (76 aa)). Residues 208–473 (DLRALAKHLY…HPLLQEIYKD (266 aa)) form the NR LBD domain. A Glycyl lysine isopeptide (Lys-Gly) (interchain with G-Cter in ubiquitin) cross-link involves residue K222. Positions 465 to 473 (PLLQEIYKD) match the 9aaTAD motif.

Belongs to the nuclear hormone receptor family. NR1 subfamily. Interacts with FOXO1 (acetylated form). Heterodimer with other nuclear receptors, such as RXRA. The heterodimer with the retinoic acid receptor RXRA is called adipocyte-specific transcription factor ARF6. Interacts with NCOA6 coactivator, leading to a strong increase in transcription of target genes. Interacts with coactivator PPARBP, leading to a mild increase in transcription of target genes. Interacts with NOCA7 in a ligand-inducible manner. Interacts with NCOA1 and NCOA2 LXXLL motifs. Interacts with ASXL1, ASXL2, DNTTIP2, FAM120B, MAP2K1/MEK1, NR0B2, PDPK1, PRDM16, PRMT2 and TGFB1I1. Interacts (when activated by agonist) with PPP5C. Interacts with HELZ2 and THRAP3; the interaction stimulates the transcriptional activity of PPARG. Interacts with PER2, the interaction is ligand dependent and blocks PPARG recruitment to target promoters. Interacts with NOCT. Interacts with ACTN4. Interacts (when in the liganded conformation) with GPS2. Interacts with CRY1 and CRY2 in a ligand-dependent manner. In the absence of hormonal ligand, interacts with TACC1. In macrophages, interacts with PAQR3 and STUB1; the interactions promote PPARG poylubiquitination and STUB1-mediated degradation. O-GlcNAcylation at Thr-54 reduces transcriptional activity in adipocytes. Post-translationally, phosphorylated at basal conditions and dephosphorylated when treated with the ligand. May be dephosphorylated by PPP5C. The phosphorylated form may be inactive and dephosphorylation induces adipogenic activity. In terms of processing, ubiquitinated by E3 ubiquitin-protein ligase complex containing FBXO9; leading to proteasomal degradation. Ubiquitinated at Lys-222 by TRIM55 leading to proteasomal degradation. Ubiquitinated by E3 ubiquitin-protein ligase STUB1/CHIP; leading to proteasomal degradation.

The protein resides in the nucleus. It localises to the cytoplasm. PDPK1 activates its transcriptional activity independently of its kinase activity. Interacts with HELZ2 and THRAP3; the interaction enhances the transcriptional activity of PPARG. Its function is as follows. Nuclear receptor that binds peroxisome proliferators such as hypolipidemic drugs and fatty acids. Once activated by a ligand, the nuclear receptor binds to DNA specific PPAR response elements (PPRE) and modulates the transcription of its target genes, such as acyl-CoA oxidase. It therefore controls the peroxisomal beta-oxidation pathway of fatty acids. Key regulator of adipocyte differentiation and glucose homeostasis. ARF6 acts as a key regulator of the tissue-specific adipocyte P2 (aP2) enhancer. Acts as a critical regulator of gut homeostasis by suppressing NF-kappa-B-mediated pro-inflammatory responses. Plays a role in the regulation of cardiovascular circadian rhythms by regulating the transcription of BMAL1 in the blood vessels. The sequence is that of Peroxisome proliferator-activated receptor gamma (PPARG) from Cricetulus griseus (Chinese hamster).